We begin with the raw amino-acid sequence, 368 residues long: High affinity transport system protein p37 (368 aa).

An N-terminal signal peptide occupies residues 1 to 25 (MLFKKFTWVIPSLFLTIISTSLLIS). Cysteine 26 carries N-palmitoyl cysteine lipidation. Cysteine 26 carries S-diacylglycerol cysteine lipidation.

The protein localises to the cell membrane. Its function is as follows. P37 is part of a high-affinity transport system. This is High affinity transport system protein p37 (p37) from Mycoplasma genitalium (strain ATCC 33530 / DSM 19775 / NCTC 10195 / G37) (Mycoplasmoides genitalium).